Consider the following 362-residue polypeptide: Cobalt-precorrin-5B C(1)-methyltransferase (362 aa).

It belongs to the CbiD family.

It catalyses the reaction Co-precorrin-5B + S-adenosyl-L-methionine = Co-precorrin-6A + S-adenosyl-L-homocysteine. The protein operates within cofactor biosynthesis; adenosylcobalamin biosynthesis; cob(II)yrinate a,c-diamide from sirohydrochlorin (anaerobic route): step 6/10. Its function is as follows. Catalyzes the methylation of C-1 in cobalt-precorrin-5B to form cobalt-precorrin-6A. The sequence is that of Cobalt-precorrin-5B C(1)-methyltransferase from Desulfotalea psychrophila (strain LSv54 / DSM 12343).